Consider the following 324-residue polypeptide: MSAAEMCAVAEQEPTATTHRPVLYGAALAALDVRPDGCYVDATYGRGGHARGILERLGPQGRLWVADRDPEALAHARETLADDPRCTVLGAELAELPRLLAEQGLAAGVDGLLADLGISSPQVDNPDRGFSFQRDGPLDMRMDPTTGESAAALLERLSARDIAGVLRQLGEERHAGRIARAIVAARDAGDPPRTTLALARLVEQAVPRREPGRHPATRTFQALRIAVNDELGQLDRFLEGVIDLLAPGGRLAVIAFHSLEDRRVKRFIRRASSVGDLPPSVPVPPAGCQPRLRPLGRDLRADEGEVAGNPRARSAVLRVAERLS.

S-adenosyl-L-methionine contacts are provided by residues 47-49 (GGH), Asp-67, Leu-96, Asp-115, and Gln-122.

It belongs to the methyltransferase superfamily. RsmH family.

It is found in the cytoplasm. The enzyme catalyses cytidine(1402) in 16S rRNA + S-adenosyl-L-methionine = N(4)-methylcytidine(1402) in 16S rRNA + S-adenosyl-L-homocysteine + H(+). Functionally, specifically methylates the N4 position of cytidine in position 1402 (C1402) of 16S rRNA. This Halorhodospira halophila (strain DSM 244 / SL1) (Ectothiorhodospira halophila (strain DSM 244 / SL1)) protein is Ribosomal RNA small subunit methyltransferase H.